Here is a 715-residue protein sequence, read N- to C-terminus: Fatty acid oxidation complex subunit alpha (715 aa).

The enoyl-CoA hydratase stretch occupies residues 1-190 (MTTTSAFMLN…KAGLVDDVVP (190 aa)). Residues 306–714 (GPLNSVGILG…FWTNGETDQG (409 aa)) are 3-hydroxyacyl-CoA dehydrogenase.

In the N-terminal section; belongs to the enoyl-CoA hydratase/isomerase family. It in the central section; belongs to the 3-hydroxyacyl-CoA dehydrogenase family. Heterotetramer of two alpha chains (FadJ) and two beta chains (FadI).

Its subcellular location is the cytoplasm. The enzyme catalyses a (3S)-3-hydroxyacyl-CoA = a (2E)-enoyl-CoA + H2O. The catalysed reaction is a 4-saturated-(3S)-3-hydroxyacyl-CoA = a (3E)-enoyl-CoA + H2O. It catalyses the reaction a (3S)-3-hydroxyacyl-CoA + NAD(+) = a 3-oxoacyl-CoA + NADH + H(+). It carries out the reaction (3S)-3-hydroxybutanoyl-CoA = (3R)-3-hydroxybutanoyl-CoA. It participates in lipid metabolism; fatty acid beta-oxidation. Functionally, catalyzes the formation of a hydroxyacyl-CoA by addition of water on enoyl-CoA. Also exhibits 3-hydroxyacyl-CoA epimerase and 3-hydroxyacyl-CoA dehydrogenase activities. The protein is Fatty acid oxidation complex subunit alpha of Salmonella paratyphi A (strain ATCC 9150 / SARB42).